The following is a 384-amino-acid chain: Eukaryotic translation initiation factor 3 subunit M (384 aa).

The PCI domain maps to 184–346 (ENRKAIEAMI…KKILITGAFP (163 aa)).

It belongs to the eIF-3 subunit M family. In terms of assembly, component of the eukaryotic translation initiation factor 3 (eIF-3) complex.

It localises to the cytoplasm. In terms of biological role, component of the eukaryotic translation initiation factor 3 (eIF-3) complex, which is involved in protein synthesis of a specialized repertoire of mRNAs and, together with other initiation factors, stimulates binding of mRNA and methionyl-tRNAi to the 40S ribosome. The eIF-3 complex specifically targets and initiates translation of a subset of mRNAs involved in cell proliferation. The polypeptide is Eukaryotic translation initiation factor 3 subunit M (Schistosoma japonicum (Blood fluke)).